The primary structure comprises 411 residues: tRNA pseudouridine synthase Pus10 (411 aa).

Positions 65–192 (ALAKCHLPTR…SGQVKVVRNP (128 aa)) constitute a THUMP domain. Asp-244 acts as the Nucleophile in catalysis. Residues Tyr-305 and Tyr-376 each contribute to the substrate site.

Belongs to the pseudouridine synthase Pus10 family.

It carries out the reaction uridine(54) in tRNA = pseudouridine(54) in tRNA. The catalysed reaction is uridine(55) in tRNA = pseudouridine(55) in tRNA. Functionally, responsible for synthesis of pseudouridine from uracil-54 and uracil-55 in the psi GC loop of transfer RNAs. The polypeptide is tRNA pseudouridine synthase Pus10 (Pyrobaculum arsenaticum (strain DSM 13514 / JCM 11321 / PZ6)).